A 468-amino-acid chain; its full sequence is 3-isopropylmalate dehydratase large subunit (468 aa).

[4Fe-4S] cluster-binding residues include Cys345, Cys405, and Cys408.

Belongs to the aconitase/IPM isomerase family. LeuC type 1 subfamily. Heterodimer of LeuC and LeuD. [4Fe-4S] cluster is required as a cofactor.

It catalyses the reaction (2R,3S)-3-isopropylmalate = (2S)-2-isopropylmalate. It participates in amino-acid biosynthesis; L-leucine biosynthesis; L-leucine from 3-methyl-2-oxobutanoate: step 2/4. Functionally, catalyzes the isomerization between 2-isopropylmalate and 3-isopropylmalate, via the formation of 2-isopropylmaleate. The protein is 3-isopropylmalate dehydratase large subunit of Oceanobacillus iheyensis (strain DSM 14371 / CIP 107618 / JCM 11309 / KCTC 3954 / HTE831).